A 551-amino-acid chain; its full sequence is MQGVTRASILLIIYHLFTLSLGQLHGEKGISVPEHGFCQPISIPLCTDIAYNQTIMPNLLGHTNQEDAGLEVHQFYPLVKVQCSSELRFFLCSMYAPVCTVLEQAIPPCRSICERARHGCEALMNKFGFQWPERLRCENFPRHGAEQICVGQNHSEDGGPTLLTTSPPHHGTPGPPIYATLDHPFHCPRVLKVPSYLNYRFLGEKDCAAPCEPTKSDGFMFFSQDEIRFARIWILIWSVLCCASTFITVTTYLVDMQRFRYPERPIIFLSGCYTMVSVAYIAGFVLGDKVVCNEGFSEDGYKTVVQGTKKEGCTILFMMLYFFSMASSIWWVILSLTWFLAAGMKWGHEAIEANSQYFHLAAWAVPAVKTITILAMGQIDGDLLSGVCFVGLNNIDPLRGFVLAPLFVYLFIGTSFLLAGFVSLFRIRTIMKHDGTKTEKLERLMVRIGVFSVLYTVPATIVIACYFYEQAFREHWERSWVSQNCKSLAIPCPLQYTPRMTPDFTVYMIKYLMTLIVGITSGFWIWSGKTLHSWRKFYTRLTNSKHGETTV.

The signal sequence occupies residues 1–26 (MQGVTRASILLIIYHLFTLSLGQLHG). The Extracellular portion of the chain corresponds to 27–231 (EKGISVPEHG…FSQDEIRFAR (205 aa)). The 120-residue stretch at 33–152 (PEHGFCQPIS…HGAEQICVGQ (120 aa)) folds into the FZ domain. Cystine bridges form between Cys-38–Cys-99, Cys-46–Cys-92, Cys-83–Cys-120, Cys-109–Cys-149, and Cys-113–Cys-137. N-linked (GlcNAc...) asparagine glycosylation is present at Asn-52. Asn-153 carries an N-linked (GlcNAc...) asparagine glycan. Residues 232–252 (IWILIWSVLCCASTFITVTTY) traverse the membrane as a helical segment. The Cytoplasmic portion of the chain corresponds to 253-265 (LVDMQRFRYPERP). Residues 266–286 (IIFLSGCYTMVSVAYIAGFVL) form a helical membrane-spanning segment. The Extracellular portion of the chain corresponds to 287–313 (GDKVVCNEGFSEDGYKTVVQGTKKEGC). Residues 314-334 (TILFMMLYFFSMASSIWWVIL) traverse the membrane as a helical segment. Over 335 to 356 (SLTWFLAAGMKWGHEAIEANSQ) the chain is Cytoplasmic. The helical transmembrane segment at 357–377 (YFHLAAWAVPAVKTITILAMG) threads the bilayer. The Extracellular segment spans residues 378 to 400 (QIDGDLLSGVCFVGLNNIDPLRG). A helical membrane pass occupies residues 401–421 (FVLAPLFVYLFIGTSFLLAGF). Residues 422–447 (VSLFRIRTIMKHDGTKTEKLERLMVR) are Cytoplasmic-facing. The chain crosses the membrane as a helical span at residues 448–468 (IGVFSVLYTVPATIVIACYFY). Residues 469 to 505 (EQAFREHWERSWVSQNCKSLAIPCPLQYTPRMTPDFT) are Extracellular-facing. Residues 506-526 (VYMIKYLMTLIVGITSGFWIW) form a helical membrane-spanning segment. At 527-534 (SGKTLHSW) the chain is on the cytoplasmic side. The short motif at 529–534 (KTLHSW) is the Lys-Thr-X-X-X-Trp motif, mediates interaction with the PDZ domain of Dvl family members element. A PDZ-binding motif is present at residues 549–551 (TTV).

Belongs to the G-protein coupled receptor Fz/Smo family. As to expression, widely expressed, especially in the eye anlage, otic vesicle and developing somites.

Its subcellular location is the membrane. It is found in the cell membrane. Receptor for Wnt proteins. Most of frizzled receptors are coupled to the beta-catenin canonical signaling pathway, which leads to the activation of disheveled proteins, inhibition of GSK-3 kinase, nuclear accumulation of beta-catenin and activation of Wnt target genes. A second signaling pathway involving PKC and calcium fluxes has been seen for some family members, but it is not yet clear if it represents a distinct pathway or if it can be integrated in the canonical pathway, as PKC seems to be required for Wnt-mediated inactivation of GSK-3 kinase. Both pathways seem to involve interactions with G-proteins. May be involved in transduction and intercellular transmission of polarity information during tissue morphogenesis and/or in differentiated tissues. This Xenopus laevis (African clawed frog) protein is Frizzled-2 (fzd2).